The chain runs to 300 residues: MANCEFSPVSGDKPCCRLSRRAQLCLGVSILVLILVVVLAVVVPRWRQQWSGPGTTKRFPETVLARCVKYTEIHPEMRHVDCQSVWDAFKGAFISKHPCNITEEDYQPLMKLGTQTVPCNKILLWSRIKDLAHQFTQVQRDMFTLEDTLLGYLADDLTWCGEFNTSKINYQSCPDWRKDCSNNPVSVFWKTVSRRFAEAACDVVHVMLNGSRSKIFDKNSTFGSVEVHNLQPEKVQTLEAWVIHGGREDSRDLCQDPTIKELESIISKRNIQFSCKNIYRPDKFLQCVKNPEDSSCTSEI.

Topologically, residues 1–21 (MANCEFSPVSGDKPCCRLSRR) are cytoplasmic. The chain crosses the membrane as a helical; Signal-anchor for type II membrane protein span at residues 22 to 42 (AQLCLGVSILVLILVVVLAVV). Residues 43 to 300 (VPRWRQQWSG…PEDSSCTSEI (258 aa)) are Extracellular-facing. 3 cysteine pairs are disulfide-bonded: Cys-67–Cys-82, Cys-99–Cys-180, and Cys-160–Cys-173. Asn-100 carries an N-linked (GlcNAc...) asparagine glycan. Cys-119 is an active-site residue. An N-linked (GlcNAc...) asparagine glycan is attached at Asn-164. Cys-201 is a catalytic residue. N-linked (GlcNAc...) asparagine glycosylation is found at Asn-209 and Asn-219. 2 cysteine pairs are disulfide-bonded: Cys-254–Cys-275 and Cys-287–Cys-296.

This sequence belongs to the ADP-ribosyl cyclase family. Homodimer. As to expression, expressed at high levels in pancreas, liver, kidney, brain, testis, ovary, placenta, malignant lymphoma and neuroblastoma.

It is found in the cell surface. The protein resides in the membrane. It carries out the reaction 2'-phospho-cyclic ADP-ribose + nicotinate = nicotinate-adenine dinucleotide phosphate. The enzyme catalyses NAD(+) = cyclic ADP-beta-D-ribose + nicotinamide + H(+). The catalysed reaction is NAD(+) + H2O = ADP-D-ribose + nicotinamide + H(+). It catalyses the reaction cyclic ADP-beta-D-ribose + H2O = ADP-D-ribose. It carries out the reaction NADP(+) = 2'-phospho-cyclic ADP-ribose + nicotinamide. The enzyme catalyses nicotinate + NADP(+) = nicotinate-adenine dinucleotide phosphate + nicotinamide. With respect to regulation, ATP inhibits the cADPR hydrolyzing activity. In terms of biological role, synthesizes cyclic ADP-ribose (cADPR), a second messenger for glucose-induced insulin secretion. Synthesizes the Ca(2+) mobilizer nicotinate-adenine dinucleotide phosphate, NAADP(+), from 2'-phospho-cADPR and nicotinic acid, as well as from NADP(+) and nicotinic acid. At both pH 5.0 and pH 7.4 preferentially transforms 2'-phospho-cADPR into NAADP(+), while preferentially cleaving NADP(+) to cADPR and ADPRP rather than into NADDP(+). Has cADPR hydrolase activity. The sequence is that of ADP-ribosyl cyclase/cyclic ADP-ribose hydrolase 1 (CD38) from Homo sapiens (Human).